The chain runs to 667 residues: Probable oxidoreductase YyaE (667 aa).

The 4Fe-4S Mo/W bis-MGD-type domain maps to 2–59; it reads SKVHQSACPLNCWDSCGFLVTVDDGKVTKVDGDPNHPITEGKICGRGRMLETKTNSPD. Cys9, Cys13, Cys17, and Cys45 together coordinate [4Fe-4S] cluster.

It belongs to the prokaryotic molybdopterin-containing oxidoreductase family. Mo-bis(molybdopterin guanine dinucleotide) is required as a cofactor.

The chain is Probable oxidoreductase YyaE (yyaE) from Bacillus subtilis (strain 168).